Here is a 146-residue protein sequence, read N- to C-terminus: Large ribosomal subunit protein uL15 (146 aa).

Basic and acidic residues predominate over residues 1-13; it reads MKLHELKPAEGSR. Residues 1–47 are disordered; sequence MKLHELKPAEGSRKSRKRIGRGTGSGLGRNAGKGEKGQKARAGGGVR. Residues 21 to 31 show a composition bias toward gly residues; it reads RGTGSGLGRNA.

This sequence belongs to the universal ribosomal protein uL15 family. In terms of assembly, part of the 50S ribosomal subunit.

Binds to the 23S rRNA. This is Large ribosomal subunit protein uL15 from Clostridium kluyveri (strain NBRC 12016).